The sequence spans 291 residues: Formamidopyrimidine-DNA glycosylase (291 aa).

P2 functions as the Schiff-base intermediate with DNA in the catalytic mechanism. The active-site Proton donor is E3. The active-site Proton donor; for beta-elimination activity is K58. DNA contacts are provided by H100, R123, and K166. The FPG-type zinc-finger motif lies at 257–291 (SVYGREGKECLQCGTPIIRILQSGRSSFYCSQCQK). The active-site Proton donor; for delta-elimination activity is the R281.

The protein belongs to the FPG family. Monomer. It depends on Zn(2+) as a cofactor.

It carries out the reaction Hydrolysis of DNA containing ring-opened 7-methylguanine residues, releasing 2,6-diamino-4-hydroxy-5-(N-methyl)formamidopyrimidine.. The enzyme catalyses 2'-deoxyribonucleotide-(2'-deoxyribose 5'-phosphate)-2'-deoxyribonucleotide-DNA = a 3'-end 2'-deoxyribonucleotide-(2,3-dehydro-2,3-deoxyribose 5'-phosphate)-DNA + a 5'-end 5'-phospho-2'-deoxyribonucleoside-DNA + H(+). Involved in base excision repair of DNA damaged by oxidation or by mutagenic agents. Acts as a DNA glycosylase that recognizes and removes damaged bases. Has a preference for oxidized purines, such as 7,8-dihydro-8-oxoguanine (8-oxoG). Has AP (apurinic/apyrimidinic) lyase activity and introduces nicks in the DNA strand. Cleaves the DNA backbone by beta-delta elimination to generate a single-strand break at the site of the removed base with both 3'- and 5'-phosphates. The protein is Formamidopyrimidine-DNA glycosylase of Bartonella tribocorum (strain CIP 105476 / IBS 506).